We begin with the raw amino-acid sequence, 306 residues long: Curved DNA-binding protein (306 aa).

The J domain occupies 5-69; sequence DYYAIMGVKP…QRRAEYDQMW (65 aa).

It localises to the cytoplasm. Its subcellular location is the nucleoid. Functionally, DNA-binding protein that preferentially recognizes a curved DNA sequence. It is probably a functional analog of DnaJ; displays overlapping activities with DnaJ, but functions under different conditions, probably acting as a molecular chaperone in an adaptive response to environmental stresses other than heat shock. Lacks autonomous chaperone activity; binds native substrates and targets them for recognition by DnaK. Its activity is inhibited by the binding of CbpM. The protein is Curved DNA-binding protein of Shigella boydii serotype 18 (strain CDC 3083-94 / BS512).